The sequence spans 222 residues: Histidinol-phosphatase (222 aa).

Aspartate 8 functions as the Nucleophile in the catalytic mechanism. Mg(2+)-binding residues include aspartate 8, aspartate 10, and aspartate 184. Aspartate 10 functions as the Proton donor in the catalytic mechanism.

Belongs to the HAD-like hydrolase superfamily. SerB family. Mg(2+) is required as a cofactor.

It catalyses the reaction L-histidinol phosphate + H2O = L-histidinol + phosphate. It participates in amino-acid biosynthesis; L-histidine biosynthesis; L-histidine from 5-phospho-alpha-D-ribose 1-diphosphate: step 8/9. Functionally, catalyzes the dephosphorylation of histidinol-phosphate to histidinol, the direct precursor of histidine. In Neisseria meningitidis serogroup C (strain 8013), this protein is Histidinol-phosphatase.